The sequence spans 166 residues: 2-C-methyl-D-erythritol 2,4-cyclodiphosphate synthase (166 aa).

Positions 15 and 17 each coordinate a divalent metal cation. Residues 15-17 (DIH) and 43-44 (HS) each bind 4-CDP-2-C-methyl-D-erythritol 2-phosphate. Position 51 (H51) interacts with a divalent metal cation. 4-CDP-2-C-methyl-D-erythritol 2-phosphate-binding positions include 65 to 67 (DIG), 141 to 144 (TTNE), and R151.

The protein belongs to the IspF family. As to quaternary structure, homotrimer. It depends on a divalent metal cation as a cofactor.

The catalysed reaction is 4-CDP-2-C-methyl-D-erythritol 2-phosphate = 2-C-methyl-D-erythritol 2,4-cyclic diphosphate + CMP. It functions in the pathway isoprenoid biosynthesis; isopentenyl diphosphate biosynthesis via DXP pathway; isopentenyl diphosphate from 1-deoxy-D-xylulose 5-phosphate: step 4/6. In terms of biological role, involved in the biosynthesis of isopentenyl diphosphate (IPP) and dimethylallyl diphosphate (DMAPP), two major building blocks of isoprenoid compounds. Catalyzes the conversion of 4-diphosphocytidyl-2-C-methyl-D-erythritol 2-phosphate (CDP-ME2P) to 2-C-methyl-D-erythritol 2,4-cyclodiphosphate (ME-CPP) with a corresponding release of cytidine 5-monophosphate (CMP). The protein is 2-C-methyl-D-erythritol 2,4-cyclodiphosphate synthase of Prochlorococcus marinus (strain MIT 9215).